A 1036-amino-acid polypeptide reads, in one-letter code: Phytosulfokine receptor 2 (1036 aa).

Residues methionine 1–serine 16 form the signal peptide. N-linked (GlcNAc...) asparagine glycans are attached at residues asparagine 36 and asparagine 45. 17 LRR repeats span residues glutamate 89–leucine 111, glutamine 113–lysine 136, leucine 137–proline 159, glycine 160–serine 182, glycine 185–serine 207, serine 209–isoleucine 231, glutamate 233–serine 256, glycine 257–leucine 279, glutamine 281–cysteine 303, lysine 305–glycine 326, aspartate 329–cysteine 351, lysine 353–leucine 375, serine 377–leucine 398, asparagine 403–threonine 423, asparagine 427–lysine 450, lysine 451–methionine 473, and serine 475–lysine 498. 3 N-linked (GlcNAc...) asparagine glycosylation sites follow: asparagine 142, asparagine 165, and asparagine 205. Residues asparagine 251, asparagine 254, and asparagine 278 are each glycosylated (N-linked (GlcNAc...) asparagine). N-linked (GlcNAc...) asparagine glycans are attached at residues asparagine 313 and asparagine 323. N-linked (GlcNAc...) asparagine glycosylation is found at asparagine 385, asparagine 403, and asparagine 421. N-linked (GlcNAc...) asparagine glycans are attached at residues asparagine 483, asparagine 504, asparagine 523, asparagine 549, and asparagine 571. 2 LRR repeats span residues glutamate 561–leucine 583 and asparagine 585–serine 606. A helical transmembrane segment spans residues isoleucine 680–leucine 700. Threonine 751 carries the phosphothreonine modification. The 272-residue stretch at phenylalanine 754–leucine 1025 folds into the Protein kinase domain. ATP-binding positions include isoleucine 760–valine 768 and lysine 782. 2 positions are modified to phosphotyrosine: tyrosine 827 and tyrosine 867. Aspartate 880 acts as the Proton acceptor in catalysis. Tyrosine 922 bears the Phosphotyrosine mark. Residues arginine 995–glutamate 1020 form an LRR 20 repeat.

This sequence belongs to the protein kinase superfamily. Ser/Thr protein kinase family.

It is found in the cell membrane. It catalyses the reaction L-seryl-[protein] + ATP = O-phospho-L-seryl-[protein] + ADP + H(+). The enzyme catalyses L-threonyl-[protein] + ATP = O-phospho-L-threonyl-[protein] + ADP + H(+). Functionally, phytosulfokine receptor with a serine/threonine-protein kinase activity. This chain is Phytosulfokine receptor 2 (PSKR2), found in Arabidopsis thaliana (Mouse-ear cress).